The chain runs to 151 residues: Prefoldin subunit alpha (151 aa).

The protein belongs to the prefoldin subunit alpha family. Heterohexamer of two alpha and four beta subunits.

It is found in the cytoplasm. Molecular chaperone capable of stabilizing a range of proteins. Seems to fulfill an ATP-independent, HSP70-like function in archaeal de novo protein folding. The polypeptide is Prefoldin subunit alpha (Sulfurisphaera tokodaii (strain DSM 16993 / JCM 10545 / NBRC 100140 / 7) (Sulfolobus tokodaii)).